A 417-amino-acid polypeptide reads, in one-letter code: Mast cell carboxypeptidase A (417 aa).

The N-terminal stretch at 1 to 15 is a signal peptide; that stretch reads MRFFLLMAVIYTTLA. Positions 16–109 are cleaved as a propeptide — activation peptide; it reads IAPVHFDREK…IEKQFDVKDE (94 aa). The 295-residue stretch at 118 to 412 folds into the Peptidase M14 domain; the sequence is KYNDWDKIVS…LSVKFIAKYI (295 aa). Intrachain disulfides connect Cys-173-Cys-186 and Cys-245-Cys-268. Zn(2+)-binding residues include His-176 and Glu-179. His-304 is a Zn(2+) binding site. Glu-378 acts as the Proton donor/acceptor in catalysis.

Belongs to the peptidase M14 family. Zn(2+) is required as a cofactor.

Its subcellular location is the cytoplasmic vesicle. The protein localises to the secretory vesicle. It catalyses the reaction Release of a C-terminal amino acid, but little or no action with -Asp, -Glu, -Arg, -Lys or -Pro.. In Mus musculus (Mouse), this protein is Mast cell carboxypeptidase A (Cpa3).